A 475-amino-acid chain; its full sequence is MNTFETVIGIEIHIELNTKTKMFSPAPNKFNEKPNTLVHPIDVAYPGTLPRLNKEAVVKAIKLAKALNMEIDTLLRFDRKNYFYPDLPKSFQITQQNFPIGKNGTLTIESNGKKKEILIERIHLEEDTAKQIHLNDKTLVDYNRAGVPLIEIVTKPIISNAEEAANYVDMIRKIVSFIDISDAKMSEGSLRADVNISIRPFGQKFLGEKVEIKNLNSVSNLKKAIEFEKNLQIKKILSNEKIESQTKRFDESKNETVVMRTKSKTIDYKYIPEPNIPFIRIPKDFIDKIKVENLPWNIEKKLLSQNISSEFVQQFLNDFQMLLVFESIIYPNREKLSKVFFSELISLANSKNVHIKDLKFNFSEFVIALKFLDNGEISGKHLKTIINEIFTKNEKVEDIVSRNNLRLISDEDLIFNLINKASKDKNEIILEYPNKPEKVLKYLTGFVMKETEGQANPVLSFNLAKKYLDEKFKKV.

The protein belongs to the GatB/GatE family. GatB subfamily. Heterotrimer of A, B and C subunits.

It catalyses the reaction L-glutamyl-tRNA(Gln) + L-glutamine + ATP + H2O = L-glutaminyl-tRNA(Gln) + L-glutamate + ADP + phosphate + H(+). The catalysed reaction is L-aspartyl-tRNA(Asn) + L-glutamine + ATP + H2O = L-asparaginyl-tRNA(Asn) + L-glutamate + ADP + phosphate + 2 H(+). Functionally, allows the formation of correctly charged Asn-tRNA(Asn) or Gln-tRNA(Gln) through the transamidation of misacylated Asp-tRNA(Asn) or Glu-tRNA(Gln) in organisms which lack either or both of asparaginyl-tRNA or glutaminyl-tRNA synthetases. The reaction takes place in the presence of glutamine and ATP through an activated phospho-Asp-tRNA(Asn) or phospho-Glu-tRNA(Gln). This chain is Aspartyl/glutamyl-tRNA(Asn/Gln) amidotransferase subunit B, found in Mycoplasma mobile (strain ATCC 43663 / 163K / NCTC 11711) (Mesomycoplasma mobile).